The following is a 348-amino-acid chain: Lipoyl synthase (348 aa).

The [4Fe-4S] cluster site is built by cysteine 55, cysteine 60, cysteine 66, cysteine 81, cysteine 85, cysteine 88, and serine 292. Positions tryptophan 67–alanine 281 constitute a Radical SAM core domain.

Belongs to the radical SAM superfamily. Lipoyl synthase family. Requires [4Fe-4S] cluster as cofactor.

It localises to the cytoplasm. The enzyme catalyses [[Fe-S] cluster scaffold protein carrying a second [4Fe-4S](2+) cluster] + N(6)-octanoyl-L-lysyl-[protein] + 2 oxidized [2Fe-2S]-[ferredoxin] + 2 S-adenosyl-L-methionine + 4 H(+) = [[Fe-S] cluster scaffold protein] + N(6)-[(R)-dihydrolipoyl]-L-lysyl-[protein] + 4 Fe(3+) + 2 hydrogen sulfide + 2 5'-deoxyadenosine + 2 L-methionine + 2 reduced [2Fe-2S]-[ferredoxin]. The protein operates within protein modification; protein lipoylation via endogenous pathway; protein N(6)-(lipoyl)lysine from octanoyl-[acyl-carrier-protein]: step 2/2. Catalyzes the radical-mediated insertion of two sulfur atoms into the C-6 and C-8 positions of the octanoyl moiety bound to the lipoyl domains of lipoate-dependent enzymes, thereby converting the octanoylated domains into lipoylated derivatives. This is Lipoyl synthase from Corynebacterium efficiens (strain DSM 44549 / YS-314 / AJ 12310 / JCM 11189 / NBRC 100395).